Consider the following 199-residue polypeptide: Putative 3-methyladenine DNA glycosylase (199 aa).

Belongs to the DNA glycosylase MPG family.

The sequence is that of Putative 3-methyladenine DNA glycosylase from Rhizobium etli (strain ATCC 51251 / DSM 11541 / JCM 21823 / NBRC 15573 / CFN 42).